An 85-amino-acid polypeptide reads, in one-letter code: Small ribosomal subunit protein bS16c (85 aa).

Belongs to the bacterial ribosomal protein bS16 family.

The protein resides in the plastid. It is found in the chloroplast. The polypeptide is Small ribosomal subunit protein bS16c (Saccharum hybrid (Sugarcane)).